Here is a 369-residue protein sequence, read N- to C-terminus: Trichocyst matrix protein T1-B (369 aa).

Positions M1–A16 are cleaved as a signal peptide. Residues I17–G55 constitute a propeptide that is removed on maturation. Positions G56–S180 form a coiled coil. Residues I190 to N225 constitute a propeptide that is removed on maturation. A coiled-coil region spans residues K262–Q354.

Belongs to the TMP family. Two components are produced by post-translational processing from the precursor peptide.

It is found in the trichocyst. In terms of biological role, structural protein that crystallize inside the trichocyst matrix. The chain is Trichocyst matrix protein T1-B (T1B) from Paramecium tetraurelia.